A 164-amino-acid polypeptide reads, in one-letter code: MSFATADLCDAHEDQLALGTLRVLEPVFHLFSRAECFSGEAVTLKVFEDNALVRATLEEKGAGRVLVIDGGGSLRCALVGGNLAQLAEQNGWAGIVLNGCVRDALELNEVNVGIAALTTSPRRGQKLGTGERDVAVHLPGALVRPGEWVYADIDGVLVASAALN.

Residues 80–83 and Arg102 each bind substrate; that span reads GGNL. Position 103 (Asp103) interacts with a divalent metal cation.

The protein belongs to the class II aldolase/RraA-like family. As to quaternary structure, homotrimer. A divalent metal cation serves as cofactor.

The catalysed reaction is 4-hydroxy-4-methyl-2-oxoglutarate = 2 pyruvate. The enzyme catalyses oxaloacetate + H(+) = pyruvate + CO2. In terms of biological role, catalyzes the aldol cleavage of 4-hydroxy-4-methyl-2-oxoglutarate (HMG) into 2 molecules of pyruvate. Also contains a secondary oxaloacetate (OAA) decarboxylase activity due to the common pyruvate enolate transition state formed following C-C bond cleavage in the retro-aldol and decarboxylation reactions. The chain is Putative 4-hydroxy-4-methyl-2-oxoglutarate aldolase from Paraburkholderia phytofirmans (strain DSM 17436 / LMG 22146 / PsJN) (Burkholderia phytofirmans).